The following is a 293-amino-acid chain: Cell adhesion molecule CEACAM21 (293 aa).

The N-terminal stretch at 1-34 (MGPPSACPHRECIPWQGLLLTASLLTFWNAPTTA) is a signal peptide. The Extracellular portion of the chain corresponds to 35–240 (WLFIASAPFE…TVKSDDNTLG (206 aa)). N-linked (GlcNAc...) asparagine glycosylation is present at Asn-111. Residues 147–231 (PSIQASSTTV…SNRSDPLKLT (85 aa)) enclose the Ig-like C2-type domain. Residues Cys-166 and Cys-214 are joined by a disulfide bond. A helical membrane pass occupies residues 241-261 (ILIGVLVGSLLVAALVCFLLL). At 262–293 (RKTGRASDQSDFREQQPPASTPGHGPSDSSIS) the chain is on the cytoplasmic side. Residues 267–293 (ASDQSDFREQQPPASTPGHGPSDSSIS) form a disordered region.

This sequence belongs to the immunoglobulin superfamily. CEA family.

It is found in the membrane. This Homo sapiens (Human) protein is Cell adhesion molecule CEACAM21.